Reading from the N-terminus, the 877-residue chain is Alanine--tRNA ligase (877 aa).

Residues His-567, His-571, Cys-669, and His-673 each contribute to the Zn(2+) site.

This sequence belongs to the class-II aminoacyl-tRNA synthetase family. Zn(2+) serves as cofactor.

It localises to the cytoplasm. The enzyme catalyses tRNA(Ala) + L-alanine + ATP = L-alanyl-tRNA(Ala) + AMP + diphosphate. Functionally, catalyzes the attachment of alanine to tRNA(Ala) in a two-step reaction: alanine is first activated by ATP to form Ala-AMP and then transferred to the acceptor end of tRNA(Ala). Also edits incorrectly charged Ser-tRNA(Ala) and Gly-tRNA(Ala) via its editing domain. This is Alanine--tRNA ligase from Lactobacillus delbrueckii subsp. bulgaricus (strain ATCC 11842 / DSM 20081 / BCRC 10696 / JCM 1002 / NBRC 13953 / NCIMB 11778 / NCTC 12712 / WDCM 00102 / Lb 14).